Here is a 1306-residue protein sequence, read N- to C-terminus: DNA-directed RNA polymerase subunit beta' (1306 aa).

Zn(2+)-binding residues include C214, C285, C292, and C295. Disordered stretches follow at residues 1234-1263 (LDNG…PNRL) and 1281-1306 (IARA…DDDK). The segment covering 1247-1259 (QGERDNNNSDKKP) has biased composition (basic and acidic residues).

The protein belongs to the RNA polymerase beta' chain family. RpoC2 subfamily. In cyanobacteria the RNAP catalytic core is composed of 2 alpha, 1 beta, 1 beta', 1 gamma and 1 omega subunit. When a sigma factor is associated with the core the holoenzyme is formed, which can initiate transcription. It depends on Zn(2+) as a cofactor.

It catalyses the reaction RNA(n) + a ribonucleoside 5'-triphosphate = RNA(n+1) + diphosphate. Its function is as follows. DNA-dependent RNA polymerase catalyzes the transcription of DNA into RNA using the four ribonucleoside triphosphates as substrates. This Crocosphaera subtropica (strain ATCC 51142 / BH68) (Cyanothece sp. (strain ATCC 51142)) protein is DNA-directed RNA polymerase subunit beta'.